Here is a 499-residue protein sequence, read N- to C-terminus: Phenylalanine--tRNA ligase alpha subunit (499 aa).

L-phenylalanine-binding positions include T342, 381 to 383, and F422; that span reads QID. E424 is a binding site for Mg(2+). Residue F447 coordinates L-phenylalanine.

The protein belongs to the class-II aminoacyl-tRNA synthetase family. Phe-tRNA synthetase alpha subunit type 2 subfamily. In terms of assembly, tetramer of two alpha and two beta subunits. Mg(2+) is required as a cofactor.

It localises to the cytoplasm. The enzyme catalyses tRNA(Phe) + L-phenylalanine + ATP = L-phenylalanyl-tRNA(Phe) + AMP + diphosphate + H(+). The protein is Phenylalanine--tRNA ligase alpha subunit of Thermococcus gammatolerans (strain DSM 15229 / JCM 11827 / EJ3).